The primary structure comprises 219 residues: PRELI domain-containing protein 1, mitochondrial (219 aa).

In terms of domain architecture, PRELI/MSF1 spans 36–174; the sequence is TEDIVHREVT…ILAKLQGEAP (139 aa).

In terms of assembly, forms a complex with TRIAP1 in the mitochondrion intermembrane space. Interacts with OPA1 and AIFM1.

It is found in the mitochondrion. It localises to the mitochondrion intermembrane space. It carries out the reaction a 1,2-diacyl-sn-glycero-3-phosphate(in) = a 1,2-diacyl-sn-glycero-3-phosphate(out). Its function is as follows. Involved in the modulation of the mitochondrial apoptotic pathway by ensuring the accumulation of cardiolipin (CL) in mitochondrial membranes. In vitro, the TRIAP1:PRELID1 complex mediates the transfer of phosphatidic acid (PA) between liposomes and probably functions as a PA transporter across the mitochondrion intermembrane space to provide PA for CL synthesis in the inner membrane. Regulates the mitochondrial apoptotic pathway in primary Th cells. Regulates Th cell differentiation by down-regulating STAT6 thereby reducing IL-4-induced Th2 cell number. May be important for the development of vital and immunocompetent organs. This is PRELI domain-containing protein 1, mitochondrial (PRELID1) from Bos taurus (Bovine).